Here is a 505-residue protein sequence, read N- to C-terminus: Cobyric acid synthase (505 aa).

Residues 251–444 (DIDVAVIKLP…IHGIFDNSEF (194 aa)) form the GATase cobBQ-type domain. The Nucleophile role is filled by cysteine 332. Residue histidine 436 is part of the active site.

Belongs to the CobB/CobQ family. CobQ subfamily.

Its pathway is cofactor biosynthesis; adenosylcobalamin biosynthesis. Catalyzes amidations at positions B, D, E, and G on adenosylcobyrinic A,C-diamide. NH(2) groups are provided by glutamine, and one molecule of ATP is hydrogenolyzed for each amidation. The polypeptide is Cobyric acid synthase (Clostridium novyi (strain NT)).